The following is a 41-amino-acid chain: Large ribosomal subunit protein bL36 (41 aa).

Belongs to the bacterial ribosomal protein bL36 family.

The sequence is that of Large ribosomal subunit protein bL36 from Bartonella henselae (strain ATCC 49882 / DSM 28221 / CCUG 30454 / Houston 1) (Rochalimaea henselae).